A 374-amino-acid polypeptide reads, in one-letter code: MEESDSEKKTEKENVGPKVEPPLGEPEGSLGWAMPNAAMKKKVLLMGKSGSGKTSMRSIIFANYIARDTRRLGATILDRIHSLQINSSLSTYSLVDSVGNTKTFDVEHSHVRFLGNLVLNLWDCGGQDTFMENYFTSQRDNIFRNVEVLIYVFDVESRELEKDMHYYQSCLEAILQNSPEAKIFCLVHKMDLVQEDQRDLIFKEREEDLRRLSRPLECSCFRTSIWDETLYKAWSSIVYQLIPNVQQLEMNLRNFAEIIEADEVLLFERATFLVISHYQCKEQRDAHRFEKISNIIKQFKLSCSKLAASFQSMEVRNSNFAAFIDIFTSNTYVMVVMSDPSIPSAATLINIRNARKHFEKLERVDGPKQCLLMR.

N-acetylmethionine is present on Met1. Basic and acidic residues predominate over residues 1 to 15 (MEESDSEKKTEKENV). Residues 1–30 (MEESDSEKKTEKENVGPKVEPPLGEPEGSL) are disordered. Ser49 and Gly50 together coordinate GTP. GDP contacts are provided by Gly50, Ser51, Gly52, Lys53, Thr54, Ser55, Thr69, and Thr75. Gly52, Lys53, Thr54, Ser55, Thr69, Thr75, Gly126, and His188 together coordinate GTP. Positions 188 and 191 each coordinate GDP. Lys203 is covalently cross-linked (Glycyl lysine isopeptide (Lys-Gly) (interchain with G-Cter in ubiquitin)). Residues Leu209 and Ile225 each contribute to the GDP site. Ile225 lines the GTP pocket. Glycyl lysine isopeptide (Lys-Gly) (interchain with G-Cter in ubiquitin) cross-links involve residues Lys281, Lys291, and Lys305.

Belongs to the GTR/RAG GTP-binding protein family. Interacts with RRAGC and RRAGD; heterodimerization stabilizes RRAG proteins. The GTP-bound form of RRAGB (in complex with the GDP-bound form of RRAGC or RRAGD) interacts with RPTOR, thereby promoting recruitment of mTORC1 to the lysosomes. Component of the lysosomal folliculin complex (LFC), composed of FLCN, FNIP1 (or FNIP2), RagA/RRAGA or RagB/RRAGB GDP-bound, RagC/RRAGC or RagD/RRAGD GTP-bound, and Ragulator. Interacts with SH3BP4; the interaction with this negative regulator is most probably direct, preferentially occurs with the inactive GDP-bound form of RRAGB, is negatively regulated by amino acids and prevents interaction with RPTOR. Interacts with the GATOR1 complex; inactivates RRAGB. The Rag heterodimer interacts with SLC38A9; the probable amino acid sensor. Interacts with SESN1, SESN2 and SESN3.

It localises to the cytoplasm. The protein resides in the lysosome membrane. The catalysed reaction is GTP + H2O = GDP + phosphate + H(+). The activation of GTP-binding proteins is generally mediated by a guanine exchange factor (GEF), while inactivation through hydrolysis of bound GTP is catalyzed by a GTPase activating protein (GAP). The Ragulator complex functions as a GEF and promotes the active GTP-bound form. The GATOR1 complex functions as a GAP and stimulates RRAGB GTPase activity to turn it into its inactive GDP-bound form, preventing mTORC1 recruitment and activation. Its function is as follows. Guanine nucleotide-binding protein that plays a crucial role in the cellular response to amino acid availability through regulation of the mTORC1 signaling cascade. Forms heterodimeric Rag complexes with RagC/RRAGC or RagD/RRAGD and cycles between an inactive GDP-bound and an active GTP-bound form: RagB/RRAGB is in its active form when GTP-bound RagB/RRAGB forms a complex with GDP-bound RagC/RRAGC (or RagD/RRAGD) and in an inactive form when GDP-bound RagB/RRAGB heterodimerizes with GTP-bound RagC/RRAGC (or RagD/RRAGD). In its GTP-bound active form, promotes the recruitment of mTORC1 to the lysosomes and its subsequent activation by the GTPase RHEB. Involved in the RCC1/Ran-GTPase pathway. The sequence is that of Ras-related GTP-binding protein B from Mus musculus (Mouse).